A 130-amino-acid chain; its full sequence is Iron-sulfur cluster insertion protein ErpA (130 aa).

The iron-sulfur cluster site is built by C46, C116, and C118.

This sequence belongs to the HesB/IscA family. As to quaternary structure, homodimer. Requires iron-sulfur cluster as cofactor.

In terms of biological role, required for insertion of 4Fe-4S clusters for at least IspG. The sequence is that of Iron-sulfur cluster insertion protein ErpA from Legionella pneumophila (strain Lens).